We begin with the raw amino-acid sequence, 619 residues long: 1-deoxy-D-xylulose-5-phosphate synthase (619 aa).

Thiamine diphosphate contacts are provided by residues H74 and 115–117 (GHS). D146 provides a ligand contact to Mg(2+). Thiamine diphosphate is bound by residues 147 to 148 (GA), N175, and Y285. N175 is a binding site for Mg(2+). The interval 289-312 (EKSPSKYHAVPPRANEKEKPSKPC) is disordered. A compositionally biased stretch (basic and acidic residues) spans 302–312 (ANEKEKPSKPC). E365 serves as a coordination point for thiamine diphosphate.

Belongs to the transketolase family. DXPS subfamily. Homodimer. It depends on Mg(2+) as a cofactor. Thiamine diphosphate serves as cofactor.

The catalysed reaction is D-glyceraldehyde 3-phosphate + pyruvate + H(+) = 1-deoxy-D-xylulose 5-phosphate + CO2. It participates in metabolic intermediate biosynthesis; 1-deoxy-D-xylulose 5-phosphate biosynthesis; 1-deoxy-D-xylulose 5-phosphate from D-glyceraldehyde 3-phosphate and pyruvate: step 1/1. Its function is as follows. Catalyzes the acyloin condensation reaction between C atoms 2 and 3 of pyruvate and glyceraldehyde 3-phosphate to yield 1-deoxy-D-xylulose-5-phosphate (DXP). This Clostridium botulinum (strain Eklund 17B / Type B) protein is 1-deoxy-D-xylulose-5-phosphate synthase.